Here is a 136-residue protein sequence, read N- to C-terminus: uncharacterized protein (136 aa).

This sequence belongs to the mimivirus L163/R849 family.

This is an uncharacterized protein from Acanthamoeba polyphaga mimivirus (APMV).